The chain runs to 273 residues: 4-hydroxy-tetrahydrodipicolinate reductase (273 aa).

Residues 12–17 (GAGGRM) and Glu38 contribute to the NAD(+) site. Arg39 is an NADP(+) binding site. Residues 102–104 (GTT) and 126–129 (AANF) each bind NAD(+). His159 serves as the catalytic Proton donor/acceptor. His160 contributes to the (S)-2,3,4,5-tetrahydrodipicolinate binding site. The Proton donor role is filled by Lys163. 169-170 (GT) is a (S)-2,3,4,5-tetrahydrodipicolinate binding site.

Belongs to the DapB family. As to quaternary structure, homotetramer.

The protein localises to the cytoplasm. It catalyses the reaction (S)-2,3,4,5-tetrahydrodipicolinate + NAD(+) + H2O = (2S,4S)-4-hydroxy-2,3,4,5-tetrahydrodipicolinate + NADH + H(+). It carries out the reaction (S)-2,3,4,5-tetrahydrodipicolinate + NADP(+) + H2O = (2S,4S)-4-hydroxy-2,3,4,5-tetrahydrodipicolinate + NADPH + H(+). The protein operates within amino-acid biosynthesis; L-lysine biosynthesis via DAP pathway; (S)-tetrahydrodipicolinate from L-aspartate: step 4/4. Functionally, catalyzes the conversion of 4-hydroxy-tetrahydrodipicolinate (HTPA) to tetrahydrodipicolinate. In Escherichia coli (strain K12 / MC4100 / BW2952), this protein is 4-hydroxy-tetrahydrodipicolinate reductase.